The primary structure comprises 207 residues: MARYLGPKAKLARREGTDLFLKSARRAIGDKSKFETKPGQHGRTSGSRTSDFGLQLREKQKVKRMYGVLERQFRRYFAEAERRKGNTGANLLLLLESRLDNVVYRMGFGSTRAEARQLVSHKGITVNGEVVNIASYLVKTGDVVAVREKAKKQLRVTESLKLAESMGLPAWVQVDATKLEGVFKKSPDRDEFGSDINESLIVELYSR.

The tract at residues 31–54 (KSKFETKPGQHGRTSGSRTSDFGL) is disordered. Residues 42–52 (GRTSGSRTSDF) show a composition bias toward polar residues. One can recognise an S4 RNA-binding domain in the interval 97 to 158 (SRLDNVVYRM…KAKKQLRVTE (62 aa)).

It belongs to the universal ribosomal protein uS4 family. In terms of assembly, part of the 30S ribosomal subunit. Contacts protein S5. The interaction surface between S4 and S5 is involved in control of translational fidelity.

In terms of biological role, one of the primary rRNA binding proteins, it binds directly to 16S rRNA where it nucleates assembly of the body of the 30S subunit. Its function is as follows. With S5 and S12 plays an important role in translational accuracy. This Methylibium petroleiphilum (strain ATCC BAA-1232 / LMG 22953 / PM1) protein is Small ribosomal subunit protein uS4.